The primary structure comprises 57 residues: Serine protease inhibitor Kazal-type 1 (57 aa).

The region spanning 4-57 (LQRQANCNLKVNGCNKIYNPICGSDGITYANECLLCLENKKRQTSILVEKSGPC) is the Kazal-like domain. Cystine bridges form between Cys10–Cys39, Cys17–Cys36, and Cys25–Cys57.

Its subcellular location is the secreted. Serine protease inhibitor which exhibits anti-trypsin activity. In the pancreas, protects against trypsin-catalyzed premature activation of zymogens. Its function is as follows. In the male reproductive tract, binds to sperm heads where it modulates sperm capacitance by inhibiting calcium uptake and nitrogen oxide (NO) production. The chain is Serine protease inhibitor Kazal-type 1 (SPINK1) from Canis lupus familiaris (Dog).